Reading from the N-terminus, the 312-residue chain is tRNA uridine(34) hydroxylase (312 aa).

The Rhodanese domain occupies 130 to 225; sequence RGDEVVFFDG…YGEKFGNQGL (96 aa). Residue cysteine 185 is the Cysteine persulfide intermediate of the active site.

The protein belongs to the TrhO family.

It carries out the reaction uridine(34) in tRNA + AH2 + O2 = 5-hydroxyuridine(34) in tRNA + A + H2O. Functionally, catalyzes oxygen-dependent 5-hydroxyuridine (ho5U) modification at position 34 in tRNAs. The polypeptide is tRNA uridine(34) hydroxylase (Corynebacterium efficiens (strain DSM 44549 / YS-314 / AJ 12310 / JCM 11189 / NBRC 100395)).